Here is a 282-residue protein sequence, read N- to C-terminus: 3-methyl-2-oxobutanoate hydroxymethyltransferase (282 aa).

Residues Asp45 and Asp84 each coordinate Mg(2+). 3-methyl-2-oxobutanoate-binding positions include 45–46, Asp84, and Lys114; that span reads DS. Glu116 is a binding site for Mg(2+). The active-site Proton acceptor is the Glu183.

This sequence belongs to the PanB family. Homodecamer; pentamer of dimers. Requires Mg(2+) as cofactor.

Its subcellular location is the cytoplasm. The catalysed reaction is 3-methyl-2-oxobutanoate + (6R)-5,10-methylene-5,6,7,8-tetrahydrofolate + H2O = 2-dehydropantoate + (6S)-5,6,7,8-tetrahydrofolate. It functions in the pathway cofactor biosynthesis; (R)-pantothenate biosynthesis; (R)-pantoate from 3-methyl-2-oxobutanoate: step 1/2. Catalyzes the reversible reaction in which hydroxymethyl group from 5,10-methylenetetrahydrofolate is transferred onto alpha-ketoisovalerate to form ketopantoate. The protein is 3-methyl-2-oxobutanoate hydroxymethyltransferase of Syntrophobacter fumaroxidans (strain DSM 10017 / MPOB).